The primary structure comprises 432 residues: Neuronal pentraxin-2 (432 aa).

An N-terminal signal peptide occupies residues 1–14; that stretch reads MLALLTAGVALAVA. 2 N-linked (GlcNAc...) asparagine glycosylation sites follow: Asn-149 and Asn-190. The 202-residue stretch at 224–425 folds into the Pentraxin (PTX) domain; it reads DAFKVSLPLR…GASKWPVETC (202 aa). The cysteines at positions 254 and 314 are disulfide-linked. 5 residues coordinate Ca(2+): Asn-278, Glu-356, Gln-357, Asp-358, and Gln-368. Asn-394 carries an N-linked (GlcNAc...) asparagine glycan.

In terms of assembly, homooligomer or heterooligomer (probably pentamer) with neuronal pentraxin receptor (NPTXR). Requires Ca(2+) as cofactor.

Its subcellular location is the secreted. Its function is as follows. Likely to play role in the modification of cellular properties that underlie long-term plasticity. Binds to agar matrix in a calcium-dependent manner. The chain is Neuronal pentraxin-2 (Nptx2) from Rattus norvegicus (Rat).